A 423-amino-acid polypeptide reads, in one-letter code: Steroid hormone receptor ERR1 (423 aa).

Residues 1–67 (MSSQVVGIEP…GAGPGEQGGG (67 aa)) form a disordered region. Positions 1-76 (MSSQVVGIEP…GKLVLSSLPK (76 aa)) are repressor domain. Residue Lys-14 forms a Glycyl lysine isopeptide (Lys-Gly) (interchain with G-Cter in SUMO) linkage. Phosphoserine is present on residues Ser-19 and Ser-22. Positions 58–67 (GAGPGEQGGG) are enriched in gly residues. Residues 76–151 (KRLCLVCGDV…VGMLKEGVRL (76 aa)) constitute a DNA-binding region (nuclear receptor). 2 NR C4-type zinc fingers span residues 79 to 99 (CLVC…CEAC) and 115 to 134 (CPAS…CQAC). Residues Lys-129, Lys-138, Lys-160, and Lys-162 each carry the N6-acetyllysine; by PCAF/KAT2B modification. Residue Lys-189 forms a Glycyl lysine isopeptide (Lys-Gly) (interchain with G-Cter in SUMO2) linkage. Residues 193–421 (PVNALVSHLL…KLFLEMLEAM (229 aa)) form the NR LBD domain. Residue Lys-403 forms a Glycyl lysine isopeptide (Lys-Gly) (interchain with G-Cter in SUMO); alternate linkage. Residue Lys-403 forms a Glycyl lysine isopeptide (Lys-Gly) (interchain with G-Cter in SUMO2); alternate linkage. The interval 403–423 (KLEGKVPMHKLFLEMLEAMMD) is AF-2 domain.

The protein belongs to the nuclear hormone receptor family. NR3 subfamily. Binds DNA as a monomer or a homodimer. Interacts (via the AF2 domain) with coactivator PPARGC1A (via the L3 motif); the interaction greatly enhances transcriptional activity of genes involved in energy metabolism. Interacts with PIAS4; the interaction enhances sumoylation. Interacts with MAPK15; promotes re-localization of ESRRA to the cytoplasm through a XPO1-dependent mechanism then inhibits ESRRA transcriptional activity. Phosphorylation on Ser-19 enhances sumoylation on Lys-14 increasing repression of transcriptional activity. Post-translationally, sumoylated with SUMO2. Main site is Lys-14 which is enhanced by phosphorylation on Ser-19, cofactor activation, and by interaction with PIAS4. Sumoylation enhances repression of transcriptional activity, but has no effect on subcellular location nor on DNA binding. In terms of processing, reversibly acetylated. Acetylation by PCAF/KAT2 at Lys-129, Lys-138, Lys-160 and Lys-162 and PCAF/KAT2 decreases transcriptional activity probably by inhibiting DNA-binding activity; deacetylation involves SIRT1 and HDAC8 and increases DNA-binding.

It is found in the nucleus. The protein localises to the cytoplasm. Functionally, binds to an ERR-alpha response element (ERRE) containing a single consensus half-site, 5'-TNAAGGTCA-3'. Can bind to the medium-chain acyl coenzyme A dehydrogenase (MCAD) response element NRRE-1 and may act as an important regulator of MCAD promoter. Binds to the C1 region of the lactoferrin gene promoter. Requires dimerization and the coactivator, PGC-1A, for full activity. The ERRalpha/PGC1alpha complex is a regulator of energy metabolism. Induces the expression of PERM1 in the skeletal muscle. This is Steroid hormone receptor ERR1 (ESRRA) from Homo sapiens (Human).